The chain runs to 428 residues: MQTLIWKDLTEQEKKQALTRPAISAAGNIKDAVDAIRENVVANGDKALFELSEKFDRVKLNSLEVSEQQIEEAAQRLPEELKQAIQNAKKNIEAFHLAQVPVEADVETQSGVRCQVLTRPINRVGLYIPGGSAPLFSTVLMLAIPAKIAGCKKIVLCSPPPIADAILYAANLCGVETIYQVGGAQAVVAMAFGTETVAKVDKIFGPGNAFVTEAKRQVSQAVNGAAIDMQAGPSEVLVLADENADPDFVASDLLSQAEHGADSQVILVTPSERLALETELAVERQLTTLPRSEIAQKALAHSRIFIAENLQQCVEISNEYAPEHLVVQVQNARDLLSNIDNAGSIFLGAYSPESMGDYASGTNHVLPTYGYTRTSSSLGLADFSKRMTVQELSPQGFKDLAKTVEVMAAAERLDAHKQAVSIRLAKIK.

3 residues coordinate NAD(+): tyrosine 127, glutamine 185, and asparagine 208. Positions 234, 256, and 259 each coordinate substrate. Residues glutamine 256 and histidine 259 each contribute to the Zn(2+) site. Active-site proton acceptor residues include glutamate 323 and histidine 324. The substrate site is built by histidine 324, aspartate 357, glutamate 411, and histidine 416. Aspartate 357 contributes to the Zn(2+) binding site. A Zn(2+)-binding site is contributed by histidine 416.

Belongs to the histidinol dehydrogenase family. Zn(2+) serves as cofactor.

The enzyme catalyses L-histidinol + 2 NAD(+) + H2O = L-histidine + 2 NADH + 3 H(+). It participates in amino-acid biosynthesis; L-histidine biosynthesis; L-histidine from 5-phospho-alpha-D-ribose 1-diphosphate: step 9/9. Functionally, catalyzes the sequential NAD-dependent oxidations of L-histidinol to L-histidinaldehyde and then to L-histidine. The protein is Histidinol dehydrogenase of Mannheimia succiniciproducens (strain KCTC 0769BP / MBEL55E).